Consider the following 269-residue polypeptide: Pertussis toxin subunit 1 (269 aa).

Residues 1–34 (MRCTRAIRQTARTGWLTWLAILAVTAPVTSPAWA) form the signal peptide. Trp-60 provides a ligand contact to NAD(+). Active-site residues include His-69 and Glu-163. Cys-75 and Cys-235 are oxidised to a cystine.

The protein belongs to the bacterial exotoxin subunit A family. As to quaternary structure, pertussis toxin contains five different chains, S1-S5. They are organized into 2 functional subunits: A, composed of S1 (which is toxic) and B, containing S2, S3, S5, and two copies of S4 (B binds to the membrane receptors). Dimers of S2-S4 and S3-S4 are held together by S5.

The protein resides in the secreted. S1 is an NAD-dependent ADP-ribosyltransferase, which plays a crucial role in the pathogenesis of B.pertussis causing disruption of normal host cellular regulation. It catalyzes the ADP-ribosylation of a cysteine in the alpha subunit of host heterotrimeric G proteins. In the absence of G proteins it also catalyzes the cleavage of NAD(+) into ADP-ribose and nicotinamide. It irreversibly uncouples the G-alpha GTP-binding proteins from their membrane receptors. This Bordetella pertussis (strain Tohama I / ATCC BAA-589 / NCTC 13251) protein is Pertussis toxin subunit 1 (ptxA).